The chain runs to 189 residues: Tetratricopeptide repeat protein 36 (189 aa).

TPR repeat units follow at residues 51-84, 86-118, and 123-156; these read SKALELQGVMAAEAGDLSTALERFGQAICLLPER, SAYNNRAQARRLQGDVAGALEDLERAVELSGGR, and RQSFVQRGLLARLQGRDDDARRDFERAARLGSPF.

This sequence belongs to the TTC36 family.

In Homo sapiens (Human), this protein is Tetratricopeptide repeat protein 36 (TTC36).